A 383-amino-acid polypeptide reads, in one-letter code: Lipid-A-disaccharide synthase (383 aa).

Belongs to the LpxB family.

It catalyses the reaction a lipid X + a UDP-2-N,3-O-bis[(3R)-3-hydroxyacyl]-alpha-D-glucosamine = a lipid A disaccharide + UDP + H(+). It participates in bacterial outer membrane biogenesis; LPS lipid A biosynthesis. Condensation of UDP-2,3-diacylglucosamine and 2,3-diacylglucosamine-1-phosphate to form lipid A disaccharide, a precursor of lipid A, a phosphorylated glycolipid that anchors the lipopolysaccharide to the outer membrane of the cell. The chain is Lipid-A-disaccharide synthase from Trichlorobacter lovleyi (strain ATCC BAA-1151 / DSM 17278 / SZ) (Geobacter lovleyi).